We begin with the raw amino-acid sequence, 85 residues long: MKVTLIAILTCAAALVLHTTAAEELEAESQLMEVGMPDTELAAVDEERLFECSVSCEIEKEGNKDCKKKKCKGGWKCKFNMCVKV.

The signal sequence occupies residues 1–22 (MKVTLIAILTCAAALVLHTTAA). Residues 23 to 48 (EELEAESQLMEVGMPDTELAAVDEER) constitute a propeptide that is removed on maturation. Cystine bridges form between C52-C66, C56-C77, and C71-C82.

This sequence belongs to the neurotoxin 12 (Hwtx-2) family. 02 (Hwtx-2) subfamily. Monomer. Expressed by the venom gland.

The protein localises to the secreted. Its function is as follows. Neurotoxin active on both insects and mammals. The chain is U4-theraphotoxin-Hhn1a from Cyriopagopus hainanus (Chinese bird spider).